The primary structure comprises 1138 residues: Lysylphosphatidylglycerol biosynthesis bifunctional protein LysX (1138 aa).

The segment covering methionine 1–aspartate 15 has biased composition (polar residues). Residues methionine 1–arginine 34 form a disordered region. The phosphatidylglycerol lysyltransferase stretch occupies residues methionine 1–aspartate 646. 6 consecutive transmembrane segments (helical) span residues isoleucine 56 to leucine 76, isoleucine 92 to alanine 112, isoleucine 119 to leucine 139, isoleucine 155 to tyrosine 175, alanine 190 to tryptophan 210, and isoleucine 247 to valine 267. Residues arginine 647 to alanine 1138 form a lysine--tRNA ligase region. Residues valine 698–tryptophan 772 constitute a DNA-binding region (OB). Mg(2+) is bound by residues aspartate 1048 and glutamate 1055.

The protein in the N-terminal section; belongs to the LPG synthetase family. It in the C-terminal section; belongs to the class-II aminoacyl-tRNA synthetase family. Mg(2+) serves as cofactor.

The protein localises to the cell membrane. It carries out the reaction tRNA(Lys) + L-lysine + ATP = L-lysyl-tRNA(Lys) + AMP + diphosphate. The enzyme catalyses L-lysyl-tRNA(Lys) + a 1,2-diacyl-sn-glycero-3-phospho-(1'-sn-glycerol) = a 1,2-diacyl-sn-glycero-3-phospho-1'-(3'-O-L-lysyl)-sn-glycerol + tRNA(Lys). Catalyzes the production of L-lysyl-tRNA(Lys)transfer and the transfer of a lysyl group from L-lysyl-tRNA(Lys) to membrane-bound phosphatidylglycerol (PG), which produces lysylphosphatidylglycerol (LPG), one of the components of the bacterial membrane with a positive net charge. LPG synthesis contributes to the resistance to cationic antimicrobial peptides (CAMPs) and likely protects M.tuberculosis against the CAMPs produced by competiting microorganisms (bacteriocins). In fact, the modification of anionic phosphatidylglycerol with positively charged L-lysine results in repulsion of the peptides. This Gordonia bronchialis (strain ATCC 25592 / DSM 43247 / BCRC 13721 / JCM 3198 / KCTC 3076 / NBRC 16047 / NCTC 10667) (Rhodococcus bronchialis) protein is Lysylphosphatidylglycerol biosynthesis bifunctional protein LysX (lysX).